Here is a 118-residue protein sequence, read N- to C-terminus: SPbeta prophage-derived uncharacterized protein YoqR (118 aa).

The polypeptide is SPbeta prophage-derived uncharacterized protein YoqR (yoqR) (Bacillus subtilis (strain 168)).